The primary structure comprises 95 residues: Protein TusB (95 aa).

Belongs to the DsrH/TusB family. Heterohexamer, formed by a dimer of trimers. The hexameric TusBCD complex contains 2 copies each of TusB, TusC and TusD. The TusBCD complex interacts with TusE.

It localises to the cytoplasm. Part of a sulfur-relay system required for 2-thiolation of 5-methylaminomethyl-2-thiouridine (mnm(5)s(2)U) at tRNA wobble positions. This is Protein TusB from Escherichia coli (strain SMS-3-5 / SECEC).